Here is a 220-residue protein sequence, read N- to C-terminus: Probable septum site-determining protein MinC (220 aa).

It belongs to the MinC family. Interacts with MinD and FtsZ.

Cell division inhibitor that blocks the formation of polar Z ring septums. Rapidly oscillates between the poles of the cell to destabilize FtsZ filaments that have formed before they mature into polar Z rings. Prevents FtsZ polymerization. This is Probable septum site-determining protein MinC from Vibrio parahaemolyticus serotype O3:K6 (strain RIMD 2210633).